We begin with the raw amino-acid sequence, 167 residues long: Leptin (167 aa).

Positions 1–21 (MRCGSLCRFLWLWSCLSYIEA) are cleaved as a signal peptide. Cys117 and Cys167 are oxidised to a cystine.

This sequence belongs to the leptin family.

Its subcellular location is the secreted. Functionally, key player in the regulation of energy balance and body weight control. Once released into the circulation, has central and peripheral effects by binding LEPR, found in many tissues, which results in the activation of several major signaling pathways. In the hypothalamus, acts as an appetite-regulating factor that induces a decrease in food intake and an increase in energy consumption by inducing anorexinogenic factors and suppressing orexigenic neuropeptides, also regulates bone mass and secretion of hypothalamo-pituitary-adrenal hormones. In the periphery, increases basal metabolism, influences reproductive function, regulates pancreatic beta-cell function and insulin secretion, is pro-angiogenic for endothelial cell and affects innate and adaptive immunity. In the arcuate nucleus of the hypothalamus, activates by depolarization POMC neurons inducing FOS and SOCS3 expression to release anorexigenic peptides and inhibits by hyperpolarization NPY neurons inducing SOCS3 with a consequent reduction on release of orexigenic peptides. In addition to its known satiety inducing effect, has a modulatory role in nutrient absorption. In the intestine, reduces glucose absorption by enterocytes by activating PKC and leading to a sequential activation of p38, PI3K and ERK signaling pathways which exerts an inhibitory effect on glucose absorption. Acts as a growth factor on certain tissues, through the activation of different signaling pathways increases expression of genes involved in cell cycle regulation such as CCND1, via JAK2-STAT3 pathway, or VEGFA, via MAPK1/3 and PI3K-AKT1 pathways. May also play an apoptotic role via JAK2-STAT3 pathway and up-regulation of BIRC5 expression. Pro-angiogenic, has mitogenic activity on vascular endothelial cells and plays a role in matrix remodeling by regulating the expression of matrix metalloproteinases (MMPs) and tissue inhibitors of metalloproteinases (TIMPs). In innate immunity, modulates the activity and function of neutrophils by increasing chemotaxis and the secretion of oxygen radicals. Increases phagocytosis by macrophages and enhances secretion of pro-inflammatory mediators. Increases cytotoxic ability of NK cells. Plays a pro-inflammatory role, in synergy with IL1B, by inducing NOS2 which promotes the production of IL6, IL8 and Prostaglandin E2, through a signaling pathway that involves JAK2, PI3K, MAP2K1/MEK1 and MAPK14/p38. In adaptive immunity, promotes the switch of memory T-cells towards T helper-1 cell immune responses. Increases CD4(+)CD25(-) T-cell proliferation and reduces autophagy during TCR (T-cell receptor) stimulation, through MTOR signaling pathway activation and BCL2 up-regulation. This chain is Leptin (LEP), found in Phoca vitulina (Harbor seal).